Reading from the N-terminus, the 278-residue chain is Dermonecrotic toxin LhSicTox-alphaIV1iii (278 aa).

The active site involves histidine 5. Residues glutamate 25 and aspartate 27 each contribute to the Mg(2+) site. Histidine 41 serves as the catalytic Nucleophile. Intrachain disulfides connect cysteine 45-cysteine 51 and cysteine 47-cysteine 192. Aspartate 85 contributes to the Mg(2+) binding site.

The protein belongs to the arthropod phospholipase D family. Class II subfamily. The cofactor is Mg(2+). Expressed by the venom gland.

The protein localises to the secreted. It catalyses the reaction an N-(acyl)-sphingosylphosphocholine = an N-(acyl)-sphingosyl-1,3-cyclic phosphate + choline. The catalysed reaction is an N-(acyl)-sphingosylphosphoethanolamine = an N-(acyl)-sphingosyl-1,3-cyclic phosphate + ethanolamine. It carries out the reaction a 1-acyl-sn-glycero-3-phosphocholine = a 1-acyl-sn-glycero-2,3-cyclic phosphate + choline. The enzyme catalyses a 1-acyl-sn-glycero-3-phosphoethanolamine = a 1-acyl-sn-glycero-2,3-cyclic phosphate + ethanolamine. Its function is as follows. Dermonecrotic toxins cleave the phosphodiester linkage between the phosphate and headgroup of certain phospholipids (sphingolipid and lysolipid substrates), forming an alcohol (often choline) and a cyclic phosphate. This toxin acts on sphingomyelin (SM). It may also act on ceramide phosphoethanolamine (CPE), lysophosphatidylcholine (LPC) and lysophosphatidylethanolamine (LPE), but not on lysophosphatidylserine (LPS), and lysophosphatidylglycerol (LPG). It acts by transphosphatidylation, releasing exclusively cyclic phosphate products as second products. Induces dermonecrosis, hemolysis, increased vascular permeability, edema, inflammatory response, and platelet aggregation. The protein is Dermonecrotic toxin LhSicTox-alphaIV1iii of Loxosceles hirsuta (Recluse spider).